We begin with the raw amino-acid sequence, 174 residues long: MTNRWFNVGKIVNTHGIKGEVRVISKTDFAEERYKPGNTLYLFAEGAAEPIKVTVSAHRLHKQFHLLQFKEMPSLNEVEHLRNMVIKVPEEDLGELEEDEFYFHEIIGCEVVSEDGELIGTVKEILTPGANDVWVVARKGKKDALIPYIASVVKDININEKKIKIHVMEGLIDE.

Residues 98-171 enclose the PRC barrel domain; the sequence is EDEFYFHEII…KIKIHVMEGL (74 aa).

It belongs to the RimM family. In terms of assembly, binds ribosomal protein uS19.

It localises to the cytoplasm. Functionally, an accessory protein needed during the final step in the assembly of 30S ribosomal subunit, possibly for assembly of the head region. Essential for efficient processing of 16S rRNA. May be needed both before and after RbfA during the maturation of 16S rRNA. It has affinity for free ribosomal 30S subunits but not for 70S ribosomes. The protein is Ribosome maturation factor RimM of Bacillus velezensis (strain DSM 23117 / BGSC 10A6 / LMG 26770 / FZB42) (Bacillus amyloliquefaciens subsp. plantarum).